The chain runs to 193 residues: Potassium-transporting ATPase KdpC subunit (193 aa).

The chain crosses the membrane as a helical span at residues 7 to 27 (PLVVLFVVLTAVTGLAYPAVM).

It belongs to the KdpC family. In terms of assembly, the system is composed of three essential subunits: KdpA, KdpB and KdpC.

Its subcellular location is the cell inner membrane. In terms of biological role, part of the high-affinity ATP-driven potassium transport (or Kdp) system, which catalyzes the hydrolysis of ATP coupled with the electrogenic transport of potassium into the cytoplasm. This subunit acts as a catalytic chaperone that increases the ATP-binding affinity of the ATP-hydrolyzing subunit KdpB by the formation of a transient KdpB/KdpC/ATP ternary complex. This chain is Potassium-transporting ATPase KdpC subunit, found in Burkholderia orbicola (strain MC0-3).